A 360-amino-acid chain; its full sequence is Phospho-N-acetylmuramoyl-pentapeptide-transferase (360 aa).

A run of 10 helical transmembrane segments spans residues glycine 27–leucine 47, threonine 71–alanine 91, leucine 93–phenylalanine 113, phenylalanine 128–isoleucine 148, phenylalanine 168–glycine 188, glycine 199–serine 219, leucine 239–proline 259, alanine 262–valine 282, isoleucine 288–valine 308, and glutamine 337–leucine 357.

This sequence belongs to the glycosyltransferase 4 family. MraY subfamily. It depends on Mg(2+) as a cofactor.

It is found in the cell inner membrane. The enzyme catalyses UDP-N-acetyl-alpha-D-muramoyl-L-alanyl-gamma-D-glutamyl-meso-2,6-diaminopimeloyl-D-alanyl-D-alanine + di-trans,octa-cis-undecaprenyl phosphate = di-trans,octa-cis-undecaprenyl diphospho-N-acetyl-alpha-D-muramoyl-L-alanyl-D-glutamyl-meso-2,6-diaminopimeloyl-D-alanyl-D-alanine + UMP. The protein operates within cell wall biogenesis; peptidoglycan biosynthesis. Its function is as follows. Catalyzes the initial step of the lipid cycle reactions in the biosynthesis of the cell wall peptidoglycan: transfers peptidoglycan precursor phospho-MurNAc-pentapeptide from UDP-MurNAc-pentapeptide onto the lipid carrier undecaprenyl phosphate, yielding undecaprenyl-pyrophosphoryl-MurNAc-pentapeptide, known as lipid I. This Brucella anthropi (strain ATCC 49188 / DSM 6882 / CCUG 24695 / JCM 21032 / LMG 3331 / NBRC 15819 / NCTC 12168 / Alc 37) (Ochrobactrum anthropi) protein is Phospho-N-acetylmuramoyl-pentapeptide-transferase.